A 484-amino-acid chain; its full sequence is Signal transduction histidine-protein kinase/phosphatase MprB (484 aa).

Low complexity predominate over residues 1–10 (MAADNAGRWP). The interval 1–23 (MAADNAGRWPGQPPGPPAPTHPA) is disordered. The Cytoplasmic portion of the chain corresponds to 1–31 (MAADNAGRWPGQPPGPPAPTHPASSVSLRWR). A compositionally biased stretch (pro residues) spans 11–20 (GQPPGPPAPT). Residues 32 to 52 (VMLLAMSMVVISVVLMAVAVF) form a helical membrane-spanning segment. At 53-172 (AVTSRALYDD…TGKVLKRLGT (120 aa)) the chain is on the extracellular side. The helical transmembrane segment at 173–193 (VLLIVGGLGVAVAAIAGGMVA) threads the bilayer. An HAMP domain is found at 194–246 (SAGLRPVGRLTQAAERVARTDDLRPIPVIGNDELARLTETFNMMLRALAESRE). Over 194–484 (SAGLRPVGRL…SPAGSDEAER (291 aa)) the chain is Cytoplasmic. The 221-residue stretch at 254-474 (DAGHELRTPL…AMHVVLPGRP (221 aa)) folds into the Histidine kinase domain. His-257 is modified (phosphohistidine; by autocatalysis).

It depends on Mg(2+) as a cofactor. Requires Mn(2+) as cofactor. Autophosphorylated.

The protein localises to the cell membrane. The enzyme catalyses ATP + protein L-histidine = ADP + protein N-phospho-L-histidine.. Functionally, member of the two-component regulatory system MprB/MprA which contributes to maintaining a balance among several systems involved in stress resistance and is required for establishment and maintenance of persistent infection in the host. In response to environmental signals MprB acts both as a membrane-associated protein kinase that undergoes autophosphorylation and subsequently transfers the phosphate to MprA, and a protein phosphatase that dephosphorylates phospho-MprA. This Mycolicibacterium vanbaalenii (strain DSM 7251 / JCM 13017 / BCRC 16820 / KCTC 9966 / NRRL B-24157 / PYR-1) (Mycobacterium vanbaalenii) protein is Signal transduction histidine-protein kinase/phosphatase MprB (mprB).